A 123-amino-acid polypeptide reads, in one-letter code: Large ribosomal subunit protein uL29 (123 aa).

The protein belongs to the universal ribosomal protein uL29 family.

The polypeptide is Large ribosomal subunit protein uL29 (rpl-35) (Caenorhabditis elegans).